A 341-amino-acid polypeptide reads, in one-letter code: Cell division protein FtsX (341 aa).

The tract at residues 1 to 34 (MSTTRTPKVSERVAPKPADPQPAKKKRGEDDDGP) is disordered. The Cytoplasmic segment spans residues 1–65 (MSTTRTPKVS…RRLGKQPIGS (65 aa)). Residues 66-86 (FFTCLVMAVALSMPMGLSLLL) traverse the membrane as a helical segment. At 87–212 (KNIEQLGGSW…LAAILKLGDR (126 aa)) the chain is on the periplasmic side. The helical transmembrane segment at 213–233 (FVFGLAVMLISALLLVIGNTI) threads the bilayer. The Cytoplasmic segment spans residues 234 to 263 (RLHIENRRIEIEVIKLVGGTDAYVRRPFLY). A helical membrane pass occupies residues 264 to 284 (MGALYGLGAGLLAWGILAFGL). Residues 285-311 (NWLNEAVVGLSGLYGSDFALGGVPASD) are Periplasmic-facing. A helical membrane pass occupies residues 312-332 (GLSLLIGAVLLGYIGAWIAVA). The Cytoplasmic portion of the chain corresponds to 333-341 (RHLNELAPR).

This sequence belongs to the ABC-4 integral membrane protein family. FtsX subfamily. As to quaternary structure, forms a membrane-associated complex with FtsE.

It localises to the cell inner membrane. Its function is as follows. Part of the ABC transporter FtsEX involved in cellular division. This chain is Cell division protein FtsX, found in Pseudomonas putida (Arthrobacter siderocapsulatus).